The sequence spans 330 residues: Homeobox protein Hox-C13 (330 aa).

Positions 30–47 (GGGGGGGGGTGGAGGGCS) are enriched in gly residues. The disordered stretch occupies residues 30-50 (GGGGGGGGGTGGAGGGCSGAS). The homeobox DNA-binding region spans 260 to 319 (GRKKRVPYTKVQLKELEKEYAASKFITKEKRRRISATTNLSERQVTIWFQNRRVKEKKVV).

This sequence belongs to the Abd-B homeobox family.

The protein localises to the nucleus. Transcription factor which plays a role in hair follicle differentiation. Regulates FOXQ1 expression and that of other hair-specific genes. The chain is Homeobox protein Hox-C13 (HOXC13) from Homo sapiens (Human).